A 270-amino-acid chain; its full sequence is 3-methyl-2-oxobutanoate hydroxymethyltransferase (270 aa).

Residues Asp-43 and Asp-82 each coordinate Mg(2+). Residues 43–44 (DS), Asp-82, and Lys-112 each bind 3-methyl-2-oxobutanoate. Glu-114 lines the Mg(2+) pocket. The active-site Proton acceptor is the Glu-179.

This sequence belongs to the PanB family. Homodecamer; pentamer of dimers. It depends on Mg(2+) as a cofactor.

It is found in the cytoplasm. It carries out the reaction 3-methyl-2-oxobutanoate + (6R)-5,10-methylene-5,6,7,8-tetrahydrofolate + H2O = 2-dehydropantoate + (6S)-5,6,7,8-tetrahydrofolate. Its pathway is cofactor biosynthesis; (R)-pantothenate biosynthesis; (R)-pantoate from 3-methyl-2-oxobutanoate: step 1/2. Its function is as follows. Catalyzes the reversible reaction in which hydroxymethyl group from 5,10-methylenetetrahydrofolate is transferred onto alpha-ketoisovalerate to form ketopantoate. This Staphylococcus carnosus (strain TM300) protein is 3-methyl-2-oxobutanoate hydroxymethyltransferase.